Consider the following 179-residue polypeptide: Acireductone dioxygenase (179 aa).

The interval 7-26 (MDDAPGDPRQPHRPDPGRPV) is disordered. 4 residues coordinate Fe(2+): His-88, His-90, Glu-94, and His-133. Residues His-88, His-90, Glu-94, and His-133 each coordinate Ni(2+).

It belongs to the acireductone dioxygenase (ARD) family. As to quaternary structure, monomer. Interacts with MMP14. Fe(2+) is required as a cofactor. It depends on Ni(2+) as a cofactor. Detected in heart, colon, lung, stomach, brain, spleen, liver, skeletal muscle and kidney.

It localises to the cytoplasm. Its subcellular location is the nucleus. The protein localises to the cell membrane. It catalyses the reaction 1,2-dihydroxy-5-(methylsulfanyl)pent-1-en-3-one + O2 = 4-methylsulfanyl-2-oxobutanoate + formate + 2 H(+). It carries out the reaction 1,2-dihydroxy-5-(methylsulfanyl)pent-1-en-3-one + O2 = 3-(methylsulfanyl)propanoate + CO + formate + 2 H(+). It functions in the pathway amino-acid biosynthesis; L-methionine biosynthesis via salvage pathway; L-methionine from S-methyl-5-thio-alpha-D-ribose 1-phosphate: step 5/6. In terms of biological role, catalyzes 2 different reactions between oxygen and the acireductone 1,2-dihydroxy-3-keto-5-methylthiopentene (DHK-MTPene) depending upon the metal bound in the active site. Fe-containing acireductone dioxygenase (Fe-ARD) produces formate and 2-keto-4-methylthiobutyrate (KMTB), the alpha-ketoacid precursor of methionine in the methionine recycle pathway. Ni-containing acireductone dioxygenase (Ni-ARD) produces methylthiopropionate, carbon monoxide and formate, and does not lie on the methionine recycle pathway. Also down-regulates cell migration mediated by MMP14. Necessary for hepatitis C virus replication in an otherwise non-permissive cell line. The polypeptide is Acireductone dioxygenase (Homo sapiens (Human)).